Consider the following 88-residue polypeptide: Beta-insect excitatory toxin LqhIT1d (88 aa).

Positions 1-18 (MKFFLLFLVVLPIMGVLG) are cleaved as a signal peptide. An LCN-type CS-alpha/beta domain is found at 20–83 (KNGFAVDSNG…ISDTRKKLCD (64 aa)). Disulfide bonds link Cys34/Cys55, Cys40/Cys60, Cys44/Cys62, and Cys56/Cys82.

Belongs to the long (4 C-C) scorpion toxin superfamily. Sodium channel inhibitor family. Beta subfamily. In terms of tissue distribution, expressed by the venom gland.

The protein resides in the secreted. In terms of biological role, excitatory insect toxins induce a spastic paralysis. They bind voltage-independently at site-4 of sodium channels (Nav) and shift the voltage of activation toward more negative potentials thereby affecting sodium channel activation and promoting spontaneous and repetitive firing. The sequence is that of Beta-insect excitatory toxin LqhIT1d from Leiurus hebraeus (Hebrew deathstalker scorpion).